Reading from the N-terminus, the 240-residue chain is Probable transcriptional regulatory protein PBPRB1582 (240 aa).

This sequence belongs to the TACO1 family.

The protein resides in the cytoplasm. This is Probable transcriptional regulatory protein PBPRB1582 from Photobacterium profundum (strain SS9).